The chain runs to 324 residues: Anthranilate phosphoribosyltransferase (324 aa).

5-phospho-alpha-D-ribose 1-diphosphate is bound by residues G72, 75–76 (GD), S80, 82–85 (NVST), 99–107 (KHGNVSITS), and S111. Residue G72 coordinates anthranilate. S84 lines the Mg(2+) pocket. N102 is a binding site for anthranilate. R157 contributes to the anthranilate binding site. Mg(2+)-binding residues include D215 and E216.

It belongs to the anthranilate phosphoribosyltransferase family. Homodimer. Requires Mg(2+) as cofactor.

The catalysed reaction is N-(5-phospho-beta-D-ribosyl)anthranilate + diphosphate = 5-phospho-alpha-D-ribose 1-diphosphate + anthranilate. It participates in amino-acid biosynthesis; L-tryptophan biosynthesis; L-tryptophan from chorismate: step 2/5. In terms of biological role, catalyzes the transfer of the phosphoribosyl group of 5-phosphorylribose-1-pyrophosphate (PRPP) to anthranilate to yield N-(5'-phosphoribosyl)-anthranilate (PRA). The polypeptide is Anthranilate phosphoribosyltransferase (Pyrococcus abyssi (strain GE5 / Orsay)).